The chain runs to 685 residues: Protein arginine N-methyltransferase 7 (685 aa).

2 SAM-dependent MTase PRMT-type domains span residues 14-355 (QATW…YSLW) and 364-685 (AESI…LKSI).

Belongs to the class I-like SAM-binding methyltransferase superfamily. Protein arginine N-methyltransferase family. PRMT7 subfamily.

Its function is as follows. Essential arginine methyltransferase that can both catalyze the formation of omega-N monomethylarginine (MMA) and symmetrical dimethylarginine (sDMA). Specifically mediates the symmetrical dimethylation of arginine residues in the small nuclear ribonucleoproteins SmD1 and SmD3. This chain is Protein arginine N-methyltransferase 7 (Art7), found in Drosophila willistoni (Fruit fly).